A 338-amino-acid chain; its full sequence is Transferrin receptor subunit ESAG7 (338 aa).

Positions 1 to 17 (MRFWFVLLALLGKEIYA) are cleaved as a signal peptide. N-linked (GlcNAc...) asparagine glycosylation is found at Asn26 and Asn110. Cystine bridges form between Cys34–Cys161, Cys84–Cys311, Cys144–Cys215, and Cys230–Cys247. Asn234 is a glycosylation site (N-linked (GlcNAc...) asparagine).

In terms of assembly, heterodimer composed of ESAG6 and ESAG7. In terms of processing, N-glycosylated. Glycosylation is dispensable for heterodimer formation and host transferrin binding.

It is found in the cell membrane. The protein resides in the flagellar pocket. Transferrin receptor subunit involved in receptor-mediated acquisition of iron from the environment by binding host TF/transferrin. This Trypanosoma brucei brucei protein is Transferrin receptor subunit ESAG7.